Reading from the N-terminus, the 283-residue chain is Pantothenate synthetase (283 aa).

An ATP-binding site is contributed by 30–37; the sequence is MGALHEGH. H37 (proton donor) is an active-site residue. Residue Q61 participates in (R)-pantoate binding. Q61 is a binding site for beta-alanine. 147–150 serves as a coordination point for ATP; the sequence is GEKD. Q153 is a (R)-pantoate binding site. ATP is bound by residues I176 and 184–187; that span reads VSSR.

The protein belongs to the pantothenate synthetase family. In terms of assembly, homodimer.

Its subcellular location is the cytoplasm. It carries out the reaction (R)-pantoate + beta-alanine + ATP = (R)-pantothenate + AMP + diphosphate + H(+). Its pathway is cofactor biosynthesis; (R)-pantothenate biosynthesis; (R)-pantothenate from (R)-pantoate and beta-alanine: step 1/1. Catalyzes the condensation of pantoate with beta-alanine in an ATP-dependent reaction via a pantoyl-adenylate intermediate. The sequence is that of Pantothenate synthetase from Pelodictyon phaeoclathratiforme (strain DSM 5477 / BU-1).